Here is a 610-residue protein sequence, read N- to C-terminus: Phosphoenolpyruvate carboxykinase [GTP] (610 aa).

Substrate is bound by residues Arg-82 and Tyr-221–Gly-223. Mn(2+) contacts are provided by Lys-230 and His-250. Ser-272 contacts substrate. A GTP-binding site is contributed by Ala-273–Asn-278. The active site involves Cys-274. Asp-297 lines the Mn(2+) pocket. Residue Asn-387–Arg-389 participates in substrate binding. GTP is bound by residues Arg-389, Arg-420, and Phe-515–Asn-518.

It belongs to the phosphoenolpyruvate carboxykinase [GTP] family. In terms of assembly, monomer. The cofactor is Mn(2+).

Its subcellular location is the cytoplasm. It catalyses the reaction oxaloacetate + GTP = phosphoenolpyruvate + GDP + CO2. It functions in the pathway carbohydrate biosynthesis; gluconeogenesis. Functionally, involved in the gluconeogenesis. Catalyzes the conversion of oxaloacetate (OAA) to phosphoenolpyruvate (PEP), the rate-limiting step in the metabolic pathway that produces glucose from lactate and other precursors derived from the citric acid cycle. This Corynebacterium glutamicum (strain ATCC 13032 / DSM 20300 / JCM 1318 / BCRC 11384 / CCUG 27702 / LMG 3730 / NBRC 12168 / NCIMB 10025 / NRRL B-2784 / 534) protein is Phosphoenolpyruvate carboxykinase [GTP].